A 141-amino-acid polypeptide reads, in one-letter code: Large ribosomal subunit protein uL11 (141 aa).

Belongs to the universal ribosomal protein uL11 family. Part of the ribosomal stalk of the 50S ribosomal subunit. Interacts with L10 and the large rRNA to form the base of the stalk. L10 forms an elongated spine to which L12 dimers bind in a sequential fashion forming a multimeric L10(L12)X complex. Post-translationally, one or more lysine residues are methylated.

Its function is as follows. Forms part of the ribosomal stalk which helps the ribosome interact with GTP-bound translation factors. In Chloroflexus aurantiacus (strain ATCC 29366 / DSM 635 / J-10-fl), this protein is Large ribosomal subunit protein uL11.